A 332-amino-acid polypeptide reads, in one-letter code: L-lactate dehydrogenase A chain (332 aa).

NAD(+)-binding positions include 29 to 57 (GAVG…MEDK) and R99. 3 residues coordinate substrate: R106, N138, and R169. N138 is a binding site for NAD(+). H193 functions as the Proton acceptor in the catalytic mechanism. T248 lines the substrate pocket.

Belongs to the LDH/MDH superfamily. LDH family. Homotetramer.

It is found in the cytoplasm. The catalysed reaction is (S)-lactate + NAD(+) = pyruvate + NADH + H(+). It participates in fermentation; pyruvate fermentation to lactate; (S)-lactate from pyruvate: step 1/1. In terms of biological role, interconverts simultaneously and stereospecifically pyruvate and lactate with concomitant interconversion of NADH and NAD(+). The polypeptide is L-lactate dehydrogenase A chain (LDHA) (Sceloporus undulatus (Eastern fence lizard)).